We begin with the raw amino-acid sequence, 276 residues long: NAD-capped RNA hydrolase NudC (276 aa).

Arg-82 is a substrate binding site. Zn(2+) is bound by residues Cys-112 and Cys-115. Glu-125 lines the substrate pocket. Positions 130 and 133 each coordinate Zn(2+). Tyr-138 lines the substrate pocket. One can recognise a Nudix hydrolase domain in the interval 139–262; sequence PRISPSMIVL…SIARYLIDLY (124 aa). The a divalent metal cation site is built by Ala-172, Glu-188, and Glu-192. Residues 173–194 carry the Nudix box motif; it reads GFAEPGESAEDCLIREVREEVS. 206 to 213 lines the substrate pocket; the sequence is QCWPFPHS. Glu-233 provides a ligand contact to a divalent metal cation. Ala-255 is a binding site for substrate.

The protein belongs to the Nudix hydrolase family. NudC subfamily. As to quaternary structure, homodimer. It depends on Mg(2+) as a cofactor. Mn(2+) serves as cofactor. The cofactor is Zn(2+).

It catalyses the reaction a 5'-end NAD(+)-phospho-ribonucleoside in mRNA + H2O = a 5'-end phospho-adenosine-phospho-ribonucleoside in mRNA + beta-nicotinamide D-ribonucleotide + 2 H(+). The enzyme catalyses NAD(+) + H2O = beta-nicotinamide D-ribonucleotide + AMP + 2 H(+). The catalysed reaction is NADH + H2O = reduced beta-nicotinamide D-ribonucleotide + AMP + 2 H(+). Its function is as follows. mRNA decapping enzyme that specifically removes the nicotinamide adenine dinucleotide (NAD) cap from a subset of mRNAs by hydrolyzing the diphosphate linkage to produce nicotinamide mononucleotide (NMN) and 5' monophosphate mRNA. The NAD-cap is present at the 5'-end of some mRNAs and stabilizes RNA against 5'-processing. Has preference for mRNAs with a 5'-end purine. Catalyzes the hydrolysis of a broad range of dinucleotide pyrophosphates. The polypeptide is NAD-capped RNA hydrolase NudC (Pseudomonas fluorescens (strain ATCC BAA-477 / NRRL B-23932 / Pf-5)).